The primary structure comprises 730 residues: Polyribonucleotide nucleotidyltransferase (730 aa).

Mg(2+) is bound by residues aspartate 494 and aspartate 500. Residues proline 561–isoleucine 622 enclose the KH domain. The 70-residue stretch at glycine 642–lysine 711 folds into the S1 motif domain.

Belongs to the polyribonucleotide nucleotidyltransferase family. Requires Mg(2+) as cofactor.

Its subcellular location is the cytoplasm. It catalyses the reaction RNA(n+1) + phosphate = RNA(n) + a ribonucleoside 5'-diphosphate. Involved in mRNA degradation. Catalyzes the phosphorolysis of single-stranded polyribonucleotides processively in the 3'- to 5'-direction. This is Polyribonucleotide nucleotidyltransferase from Opitutus terrae (strain DSM 11246 / JCM 15787 / PB90-1).